The chain runs to 1015 residues: Proline-rich basic protein 1 (1015 aa).

7 disordered regions span residues 1–111 (MLTA…SGEM), 139–164 (AFIS…PDGG), 196–236 (GAAP…RTGS), 259–460 (LSPE…ILSQ), 488–678 (DAVE…APAH), 690–883 (VVPH…GKVL), and 991–1015 (PPLL…LFPL). The span at 84 to 94 (PGSGFPRGPGS) shows a compositional bias: gly residues. Residues 220–233 (PRAAGAPRPRLLLR) show a composition bias toward low complexity. Polar residues predominate over residues 267–276 (SSATFGSTGR). 3 stretches are compositionally biased toward basic and acidic residues: residues 277–304 (SEPE…RVRD), 318–328 (LRERAIRRDKP), and 346–367 (SEEK…DRTV). Residues 380 to 391 (PSEVPSRAVRPR) are compositionally biased toward low complexity. Polar residues predominate over residues 531–542 (IAFTQEAQNGLT). Pro residues-rich tracts occupy residues 548-557 (PPTPSAPGTP) and 691-700 (VPHPYEPPEP). The segment covering 759–774 (ENRDVEAQRLVPDGDG) has biased composition (basic and acidic residues). A compositionally biased stretch (pro residues) spans 813-825 (GIAPKPKTPPTAP). Composition is skewed to low complexity over residues 826–835 (EPAAAVQAPL) and 847–858 (APAQPRAASAPP). Polar residues predominate over residues 861–870 (RSPQSPSQGA). A compositionally biased stretch (low complexity) spans 993–1004 (LLLCAPPSSSGP).

The sequence is that of Proline-rich basic protein 1 (PROB1) from Homo sapiens (Human).